The primary structure comprises 310 residues: Homocysteine S-methyltransferase (310 aa).

A Hcy-binding domain is found at 1–310 (MSQNNPLRAL…ADIAALKARS (310 aa)). Zn(2+)-binding residues include C229, C295, and C296.

As to quaternary structure, monomer. Zn(2+) is required as a cofactor.

It carries out the reaction S-methyl-L-methionine + L-homocysteine = 2 L-methionine + H(+). Its function is as follows. Catalyzes methyl transfer from S-methylmethionine or S-adenosylmethionine (less efficient) to homocysteine, selenohomocysteine and less efficiently selenocysteine. This is Homocysteine S-methyltransferase (mmuM) from Escherichia coli (strain K12).